The primary structure comprises 198 residues: UPF0098 protein PH1269 (198 aa).

This sequence belongs to the UPF0098 family.

The chain is UPF0098 protein PH1269 from Pyrococcus horikoshii (strain ATCC 700860 / DSM 12428 / JCM 9974 / NBRC 100139 / OT-3).